Reading from the N-terminus, the 910-residue chain is Protein translocase subunit SecA (910 aa).

Residues Q89, 107-111, and D502 contribute to the ATP site; that span reads GEGKT. Residues C894, C896, C905, and H906 each contribute to the Zn(2+) site.

This sequence belongs to the SecA family. Monomer and homodimer. Part of the essential Sec protein translocation apparatus which comprises SecA, SecYEG and auxiliary proteins SecDF-YajC and YidC. Requires Zn(2+) as cofactor.

The protein localises to the cell inner membrane. Its subcellular location is the cytoplasm. It carries out the reaction ATP + H2O + cellular proteinSide 1 = ADP + phosphate + cellular proteinSide 2.. Functionally, part of the Sec protein translocase complex. Interacts with the SecYEG preprotein conducting channel. Has a central role in coupling the hydrolysis of ATP to the transfer of proteins into and across the cell membrane, serving both as a receptor for the preprotein-SecB complex and as an ATP-driven molecular motor driving the stepwise translocation of polypeptide chains across the membrane. This Mesorhizobium japonicum (strain LMG 29417 / CECT 9101 / MAFF 303099) (Mesorhizobium loti (strain MAFF 303099)) protein is Protein translocase subunit SecA.